We begin with the raw amino-acid sequence, 159 residues long: Mediator of RNA polymerase II transcription subunit 10 (159 aa).

Positions 54 to 77 (STHTKPQPPSQDDEQKGSANDPLL) are disordered.

The protein belongs to the Mediator complex subunit 10 family. In terms of assembly, component of the Mediator complex.

It localises to the nucleus. Functionally, component of the Mediator complex, a coactivator involved in the regulated transcription of nearly all RNA polymerase II-dependent genes. Mediator functions as a bridge to convey information from gene-specific regulatory proteins to the basal RNA polymerase II transcription machinery. Mediator is recruited to promoters by direct interactions with regulatory proteins and serves as a scaffold for the assembly of a functional preinitiation complex with RNA polymerase II and the general transcription factors. The chain is Mediator of RNA polymerase II transcription subunit 10 (nut2) from Aspergillus fumigatus (strain ATCC MYA-4609 / CBS 101355 / FGSC A1100 / Af293) (Neosartorya fumigata).